The primary structure comprises 684 residues: Phenoloxidase 1 (684 aa).

The propeptide at 1–50 is removed by PPAF1; sequence MSDKNKLLLLFDRPLETVIVPRGPDQEAFDVPVDLLSDRYKAIGVQVSNR. An N-linked (GlcNAc...) asparagine glycan is attached at N80. Cu cation contacts are provided by H208, H212, and H237. E349 (proton acceptor) is an active-site residue. Residues N352 and N356 are each glycosylated (N-linked (GlcNAc...) asparagine). Residues H364, H368, and H404 each contribute to the Cu cation site. N-linked (GlcNAc...) asparagine glycans are attached at residues N486, N491, and N545. Intrachain disulfides connect C579/C621 and C581/C628.

It belongs to the tyrosinase family. In terms of assembly, dimer. Might form a homodimer or a heterodimer with PPO1. Might interact with PPAF2 (via CLIP domain); the interaction might be required for PPO1 activity. The cofactor is Cu(2+). In terms of processing, propeptide cleaved by PPAF1. Hemocytes.

Its subcellular location is the secreted. Its function is as follows. This is a copper-containing oxidase that functions in the formation of pigments such as melanins and other polyphenolic compounds. Catalyzes the oxidation of o-diphenols (N-acetyldopamine, 4-methylcatechol and dopamine). Cannot oxidize monophenols and p-phenols (L-tyrosine, tyramine, gentisic acid and hydroquinone). Binds to the surface of hemocytes and is involved in hemocyte melanization. Activation of the enzyme in response to bacterial lipopolysaccharides (LPS) suggests it may play a role in innate immunity. The chain is Phenoloxidase 1 from Holotrichia diomphalia (Korean black chafer).